The sequence spans 457 residues: Transcription factor E2F3 (457 aa).

Positions 80 to 171 (LLPSVPGTEP…PKSPSEKTRY (92 aa)) are disordered. Residues 93–102 (SLYTTPQGPS) are compositionally biased toward polar residues. Residues 96–145 (TTPQGPSSRVGLLQQPPAPGRGGGGGPPAKRRLELGESGHQYLSDGLKTP) form a cyclin A/CDK2 binding region. Residues 147 to 237 (GKGRAALRSP…KNNVQWMGCS (91 aa)) mediate DNA binding. Residues 155-164 (SPDSPKTPKS) are compositionally biased toward low complexity. Residues 196 to 217 (LNKAAEVLKVQKRRIYDITNVL) are leucine-zipper. The DEF box motif lies at 201-237 (EVLKVQKRRIYDITNVLEGIHLIKKKSKNNVQWMGCS). The segment at 238–329 (LSEDGGMLAQ…VPDSIESLQI (92 aa)) is dimerization. A disordered region spans residues 350–387 (HRPMKTNNQDHNGNIPKPTSKDLASNNSGHSDCSVSTA). A compositionally biased stretch (polar residues) spans 371-387 (DLASNNSGHSDCSVSTA). Residues 383-457 (SVSTANLSPL…LPLVEDFMCS (75 aa)) are transactivation. A retinoblastoma protein binding region spans residues 424 to 441 (EDYLLSLGEEEGISDLFD).

This sequence belongs to the E2F/DP family. As to quaternary structure, component of the DRTF1/E2F transcription factor complex. Binds cooperatively with TFDP1/Dp-1 to E2F sites. Interacts with retinoblastoma protein RB1 and related proteins (such as RBL1) that inhibit the E2F transactivation domain. Binds EAPP.

It localises to the nucleus. Its function is as follows. Transcription activator that binds DNA cooperatively with DP proteins through the E2 recognition site, 5'-TTTC[CG]CGC-3' found in the promoter region of a number of genes whose products are involved in cell cycle regulation or in DNA replication. The DRTF1/E2F complex functions in the control of cell-cycle progression from G1 to S phase. E2F3 binds specifically to RB1 in a cell-cycle dependent manner. Inhibits adipogenesis, probably through the repression of CEBPA binding to its target gene promoters. The chain is Transcription factor E2F3 (E2f3) from Mus musculus (Mouse).